The following is a 274-amino-acid chain: Nitrogenase iron protein (274 aa).

An ATP-binding site is contributed by 8 to 15 (GKGGIGKS). A [4Fe-4S] cluster-binding site is contributed by cysteine 94. At arginine 97 the chain carries ADP-ribosylarginine; by dinitrogenase reductase ADP-ribosyltransferase. Cysteine 131 is a binding site for [4Fe-4S] cluster.

It belongs to the NifH/BchL/ChlL family. Homodimer. The cofactor is [4Fe-4S] cluster. In terms of processing, the reversible ADP-ribosylation of Arg-97 inactivates the nitrogenase reductase and regulates nitrogenase activity.

It catalyses the reaction N2 + 8 reduced [2Fe-2S]-[ferredoxin] + 16 ATP + 16 H2O = H2 + 8 oxidized [2Fe-2S]-[ferredoxin] + 2 NH4(+) + 16 ADP + 16 phosphate + 6 H(+). Functionally, the key enzymatic reactions in nitrogen fixation are catalyzed by the nitrogenase complex, which has 2 components: the iron protein and the molybdenum-iron protein. This is Nitrogenase iron protein from Chlorobium phaeobacteroides (strain DSM 266 / SMG 266 / 2430).